A 199-amino-acid polypeptide reads, in one-letter code: Recombination protein RecR (199 aa).

A C4-type zinc finger spans residues 58–73 (CLNCGNIGTSDICDIC). In terms of domain architecture, Toprim spans 81-176 (GEICVVEDVA…AVTSLAQGVP (96 aa)).

The protein belongs to the RecR family.

Functionally, may play a role in DNA repair. It seems to be involved in an RecBC-independent recombinational process of DNA repair. It may act with RecF and RecO. The sequence is that of Recombination protein RecR from Dinoroseobacter shibae (strain DSM 16493 / NCIMB 14021 / DFL 12).